The primary structure comprises 376 residues: Pre-mRNA-splicing factor cwf25 (376 aa).

A coiled-coil region spans residues Lys25–Ala60. Disordered stretches follow at residues Leu153–Asn211 and Arg258–Arg289. Residues Met154–Ser167 show a composition bias toward basic and acidic residues. Over residues Lys168–Arg178 the composition is skewed to basic residues. Over residues Ser179–Glu199 the composition is skewed to basic and acidic residues. Residues Ser266 and Ser268 each carry the phosphoserine modification. Residues Ile286 to Arg334 adopt a coiled-coil conformation.

The protein belongs to the CWC25 family. As to quaternary structure, belongs to the 40S cdc5-associated complex (or cwf complex), a spliceosome sub-complex reminiscent of a late-stage spliceosome composed of the U2, U5 and U6 snRNAs and at least brr2, cdc5, cwf2/prp3, cwf3/syf1, cwf4/syf3, cwf5/ecm2, spp42/cwf6, cwf7/spf27, cwf8, cwf9, cwf10, cwf11, cwf12, prp45/cwf13, cwf14, cwf15, cwf16, cwf17, cwf18, cwf19, cwf20, cwf21, cwf22, cwf23, cwf24, cwf25, cwf26, cyp7/cwf27, cwf28, cwf29/ist3, lea1, msl1, prp5/cwf1, prp10, prp12/sap130, prp17, prp22, sap61, sap62, sap114, sap145, slu7, smb1, smd1, smd3, smf1, smg1 and syf2.

It is found in the nucleus. Involved in mRNA splicing. This is Pre-mRNA-splicing factor cwf25 (cwf25) from Schizosaccharomyces pombe (strain 972 / ATCC 24843) (Fission yeast).